The chain runs to 242 residues: Polycomb group RING finger protein 3 (242 aa).

The segment at C17–R56 adopts an RING-type zinc-finger fold. Positions E120 to H149 are disordered.

Component of a PRC1-like complex.

The protein localises to the nucleus. Its function is as follows. Component of a Polycomb group (PcG) multiprotein PRC1-like complex, a complex class required to maintain the transcriptionally repressive state of many genes, including Hox genes, throughout development. PcG PRC1 complex acts via chromatin remodeling and modification of histones; it mediates monoubiquitination of histone H2A 'Lys-119', rendering chromatin heritably changed in its expressibility. Within the PRC1-like complex, regulates RNF2 ubiquitin ligase activity. This is Polycomb group RING finger protein 3 (pcgf3) from Xenopus tropicalis (Western clawed frog).